A 236-amino-acid chain; its full sequence is 2,3,4,5-tetrahydropyridine-2,6-dicarboxylate N-acetyltransferase (236 aa).

This sequence belongs to the transferase hexapeptide repeat family. DapH subfamily.

It carries out the reaction (S)-2,3,4,5-tetrahydrodipicolinate + acetyl-CoA + H2O = L-2-acetamido-6-oxoheptanedioate + CoA. The protein operates within amino-acid biosynthesis; L-lysine biosynthesis via DAP pathway; LL-2,6-diaminopimelate from (S)-tetrahydrodipicolinate (acetylase route): step 1/3. Catalyzes the transfer of an acetyl group from acetyl-CoA to tetrahydrodipicolinate. This chain is 2,3,4,5-tetrahydropyridine-2,6-dicarboxylate N-acetyltransferase, found in Clostridium botulinum (strain Alaska E43 / Type E3).